The sequence spans 155 residues: D-aminoacyl-tRNA deacylase (155 aa).

Residues 137–138 (GP) carry the Gly-cisPro motif, important for rejection of L-amino acids motif.

The protein belongs to the DTD family. As to quaternary structure, homodimer.

The protein localises to the cytoplasm. It carries out the reaction glycyl-tRNA(Ala) + H2O = tRNA(Ala) + glycine + H(+). It catalyses the reaction a D-aminoacyl-tRNA + H2O = a tRNA + a D-alpha-amino acid + H(+). Functionally, an aminoacyl-tRNA editing enzyme that deacylates mischarged D-aminoacyl-tRNAs. Also deacylates mischarged glycyl-tRNA(Ala), protecting cells against glycine mischarging by AlaRS. Acts via tRNA-based rather than protein-based catalysis; rejects L-amino acids rather than detecting D-amino acids in the active site. By recycling D-aminoacyl-tRNA to D-amino acids and free tRNA molecules, this enzyme counteracts the toxicity associated with the formation of D-aminoacyl-tRNA entities in vivo and helps enforce protein L-homochirality. This chain is D-aminoacyl-tRNA deacylase, found in Nitrosococcus oceani (strain ATCC 19707 / BCRC 17464 / JCM 30415 / NCIMB 11848 / C-107).